The chain runs to 1025 residues: MLREIVARQDWQTQAITAVNRLPAHTPLFSWRSEAAARDDLASPSRTLLDGEWRFSFFEAPELVPEHWLVEDLPDACAIKVPGNWQLDAAYPGLRLATDVPIYTNIKYPFPCDPPRVPAENPTGCYSREFSVPADWLASGQTRIIFDGVDSAFHLFCNGRWVGYSQDSRLPAEFDLTSFLCGGDNRLAVLVLRWSDGSYLEDQDMWRMSGIFRSVSLLHKPVRHLMDIRVTPELDACYRDGRLKIALQAANGAGLSVAACLYDGGERVATLRQPIGTQAIDEKGAYDDRAECWLEVAAPRKWSAETPHLYRLTLTLLDEQGEPIESEAYDVGFRAVEIRGGLLRVNGQPLLIRGANRHEHDVASGHVVTPAAIEQDLLLMKRHNFNSVRCSHYPNHPELYRLCDRLGLYVVDEANLETHGMTPMGRLARDPAWSNAFLERVTRMVARDFNHPSIIIWSLGNESGYGPAHDAMYGWVKRADPSRPVQYEGGGADTPATDIICPMYARTHQDQPFPAVPKWALAKWIGLPGETRPLILCEYAHAMGNSLGGYAHYWQAFRDHPRLQGGFVWDWVDQGLDKLTDDGRHFWAYGGDFGDTPNDRQFCCNGLVFPDRTPHPALFEARRAQQPFGLTLLERQPLTVEIRSEYLFRETDNERLQWRLCEDGVVVSQGECPLTLAPQGSMMLTLLERLPAFAPGALAWLDLAIVQPAATPWSAVGHEVARQQCMLPAPLSLPVARTPATFIELADGWQIRAAASEWRLDKASGRVQSWCKLGREQLKEAIADHFYRAPLDNDIGTSEADHADPNAWIARWQEAGLNELQHRCLDMVVSPDQGVVTVHHGYFVGDALKLLTRWRHEFDQDGAMRLAIEVQVAAEMPSLPRIGARLWLTDEVLATGEEVSWLGRGPHENYPDRLLAADLGRWQSPLDVLHTAYVFPTDNGLRCDTRQLQLGSIEVEGLFHFSLSRFSQQQLAQARHQTDLVAEGGLHLCLDGFHMGIGGDDSWSQSVRPEYWLQPGGYYWNCVLR.

Substrate contacts are provided by Asn-105 and Asp-204. Asp-204 is a Na(+) binding site. Residues Glu-417, His-419, and Glu-462 each coordinate Mg(2+). Substrate contacts are provided by residues Glu-462 and 538–541 (EYAH). The Proton donor role is filled by Glu-462. Catalysis depends on Glu-538, which acts as the Nucleophile. Asn-598 contributes to the Mg(2+) binding site. Na(+) is bound by residues Phe-602 and Asn-605. The substrate site is built by Asn-605 and Trp-1003.

It belongs to the glycosyl hydrolase 2 family. Homotetramer. The cofactor is Mg(2+). It depends on Na(+) as a cofactor.

It carries out the reaction Hydrolysis of terminal non-reducing beta-D-galactose residues in beta-D-galactosides.. The polypeptide is Beta-galactosidase (Aeromonas hydrophila subsp. hydrophila (strain ATCC 7966 / DSM 30187 / BCRC 13018 / CCUG 14551 / JCM 1027 / KCTC 2358 / NCIMB 9240 / NCTC 8049)).